The chain runs to 516 residues: GTPase Obg (516 aa).

One can recognise an Obg domain in the interval 4-161 (PTFVDRVTLH…LEIVLELKVV (158 aa)). Positions 162–332 (ADIGLVGFPS…LTFAMAGIVE (171 aa)) constitute an OBG-type G domain. Residues 168–175 (GFPSAGKS), 193–197 (FTTLV), 214–217 (DVPG), 284–287 (NKVD), and 313–315 (SAA) contribute to the GTP site. Mg(2+) is bound by residues S175 and T195. The 82-residue stretch at 351-432 (PSVDGSDAFT…ENAVVFDFKP (82 aa)) folds into the OCT domain. Over residues 466–491 (AMADRAEGETRADVARRLDRPAREDG) the composition is skewed to basic and acidic residues. The tract at residues 466–516 (AMADRAEGETRADVARRLDRPAREDGGAYGPQSYEIGGRDDPDWAEEDLGE) is disordered.

It belongs to the TRAFAC class OBG-HflX-like GTPase superfamily. OBG GTPase family. Monomer. The cofactor is Mg(2+).

Its subcellular location is the cytoplasm. Functionally, an essential GTPase which binds GTP, GDP and possibly (p)ppGpp with moderate affinity, with high nucleotide exchange rates and a fairly low GTP hydrolysis rate. Plays a role in control of the cell cycle, stress response, ribosome biogenesis and in those bacteria that undergo differentiation, in morphogenesis control. This is GTPase Obg from Nocardioides sp. (strain ATCC BAA-499 / JS614).